A 332-amino-acid chain; its full sequence is Procathepsin L (332 aa).

The signal sequence occupies residues 1-17; that stretch reads MHPLLFLAGLCLGVASA. The propeptide at 18–112 is activation peptide; that stretch reads APQLYQSLDA…KVFQAPFFVE (95 aa). A Zn(2+)-binding site is contributed by Glu121. The active site involves Cys137. Residues Glu162, Asp183, Glu198, and Asp208 each coordinate Zn(2+). Cys168 and Cys210 form a disulfide bridge. Asn220 carries N-linked (GlcNAc...) asparagine glycosylation. Positions 226, 249, 272, and 274 each coordinate Zn(2+). The cysteines at positions 268 and 321 are disulfide-linked. The active site involves His275. Residues 288 to 290 constitute a propeptide that is removed on maturation; it reads ETE. Asn299 is an active-site residue.

Belongs to the peptidase C1 family. As to quaternary structure, dimer of a heavy and a light chain linked by disulfide bonds. Interacts with Long isoform of CD74/Ii chain; the interaction stabilizes the conformation of mature CTSL. In terms of processing, during export along the endocytic pathway, pro-CTSL undergoes several proteolytic cleavages to generate the CTSL single-chain and two-chain mature forms, composed of a heavy chain linked to a light chain by disulfide bonds. Autocleavage; produces the single-chain CTSL after cleavage of the propeptide. The cleavage can be intermolecular. As to expression, expressed in the endometrium.

The protein localises to the lysosome. Its subcellular location is the apical cell membrane. The protein resides in the cytoplasmic vesicle. It localises to the secretory vesicle. It is found in the chromaffin granule. The protein localises to the secreted. Its subcellular location is the extracellular space. It carries out the reaction Specificity close to that of papain. As compared to cathepsin B, cathepsin L exhibits higher activity toward protein substrates, but has little activity on Z-Arg-Arg-NHMec, and no peptidyl-dipeptidase activity.. Inhibited by the propeptide produced by autocleavage. Long isoform of CD74/Ii chain stabilizes the conformation of mature CTSL by binding to its active site and serving as a chaperone to help maintain a pool of mature enzyme in endocytic compartments and extracellular space of APCs. IFNG enhances the conversion into the CTSL mature and active form. Inhibited by CST6. Inhibited by the glycopeptide antibiotic teicoplanin. Inhibited by amantadine. Thiol protease important for the overall degradation of proteins in lysosomes. Plays a critical for normal cellular functions such as general protein turnover, antigen processing and bone remodeling. Involved in the solubilization of cross-linked TG/thyroglobulin and in the subsequent release of thyroid hormone thyroxine (T4) by limited proteolysis of TG/thyroglobulin in the thyroid follicle lumen. In neuroendocrine chromaffin cells secretory vesicles, catalyzes the prohormone proenkephalin processing to the active enkephalin peptide neurotransmitter. In thymus, regulates CD4(+) T cell positive selection by generating the major histocompatibility complex class II (MHCII) bound peptide ligands presented by cortical thymic epithelial cells. Also mediates invariant chain processing in cortical thymic epithelial cells. Major elastin-degrading enzyme at neutral pH. Accumulates as a mature and active enzyme in the extracellular space of antigen presenting cells (APCs) to regulate degradation of the extracellular matrix in the course of inflammation. Secreted form generates endostatin from COL18A1. Critical for cardiac morphology and function. Plays an important role in hair follicle morphogenesis and cycling, as well as epidermal differentiation. Required for maximal stimulation of steroidogenesis by TIMP1. This chain is Procathepsin L (CTSL), found in Felis catus (Cat).